The following is an 89-amino-acid chain: Small ribosomal subunit protein uS15 (89 aa).

This sequence belongs to the universal ribosomal protein uS15 family. In terms of assembly, part of the 30S ribosomal subunit. Forms a bridge to the 50S subunit in the 70S ribosome, contacting the 23S rRNA.

In terms of biological role, one of the primary rRNA binding proteins, it binds directly to 16S rRNA where it helps nucleate assembly of the platform of the 30S subunit by binding and bridging several RNA helices of the 16S rRNA. Forms an intersubunit bridge (bridge B4) with the 23S rRNA of the 50S subunit in the ribosome. In Azobacteroides pseudotrichonymphae genomovar. CFP2, this protein is Small ribosomal subunit protein uS15.